Reading from the N-terminus, the 311-residue chain is Tricarboxylate transport protein, mitochondrial (311 aa).

A propeptide spans 1-13 (MAAPRAPRALTAA) (removed in mature form). Solcar repeat units follow at residues 23-111 (THPG…LSNH), 122-208 (RRGL…LRNW), and 218-303 (MNPL…VVKL). Transmembrane regions (helical) follow at residues 29–46 (ILAG…TFPT), 86–105 (GLSS…FGMF), and 129–143 (LGAG…VCPM). Residue S156 is modified to Phosphoserine. Transmembrane regions (helical) follow at residues 183 to 202 (GLTA…FFVM), 224 to 241 (GVFG…NTPL), and 278 to 297 (GTVP…FVIY).

Belongs to the mitochondrial carrier (TC 2.A.29) family. In terms of processing, possesses a short cleavable presequence, which, however, is found to be dispensable both for targeting to mitochondria and insertion into the inner membrane. However, the presequence is required to keep SLC25A1 in a soluble state and thus in an import-competent state. Mature SLC25A1 lacking the presequence is prone to aggregation.

The protein localises to the mitochondrion inner membrane. The enzyme catalyses (S)-malate(in) + citrate(out) = (S)-malate(out) + citrate(in). It carries out the reaction citrate(out) + succinate(in) = citrate(in) + succinate(out). It catalyses the reaction D-threo-isocitrate(in) + citrate(out) = D-threo-isocitrate(out) + citrate(in). The catalysed reaction is cis-aconitate(in) + citrate(out) = cis-aconitate(out) + citrate(in). The enzyme catalyses trans-aconitate(in) + citrate(out) = trans-aconitate(out) + citrate(in). It carries out the reaction phosphoenolpyruvate(in) + citrate(out) = phosphoenolpyruvate(out) + citrate(in). It catalyses the reaction maleate(in) + citrate(out) = maleate(out) + citrate(in). In terms of biological role, mitochondrial electroneutral antiporter that exports citrate from the mitochondria into the cytosol in exchange for malate. Also able to mediate the exchange of citrate for isocitrate, phosphoenolpyruvate, cis-aconitate and to a lesser extent trans-aconitate, maleate and succinate. In the cytoplasm, citrate plays important roles in fatty acid and sterol synthesis, regulation of glycolysis, protein acetylation, and other physiopathological processes. This Rattus norvegicus (Rat) protein is Tricarboxylate transport protein, mitochondrial (Slc25a1).